Reading from the N-terminus, the 277-residue chain is Phosphate import ATP-binding protein PstB (277 aa).

The 242-residue stretch at 31-272 (IEVPGLSLFY…PAKKQTEDYI (242 aa)) folds into the ABC transporter domain. Residue 63-70 (GPSGCGKS) coordinates ATP.

This sequence belongs to the ABC transporter superfamily. Phosphate importer (TC 3.A.1.7) family. The complex is composed of two ATP-binding proteins (PstB), two transmembrane proteins (PstC and PstA) and a solute-binding protein (PstS).

The protein localises to the cell inner membrane. It carries out the reaction phosphate(out) + ATP + H2O = ADP + 2 phosphate(in) + H(+). In terms of biological role, part of the ABC transporter complex PstSACB involved in phosphate import. Responsible for energy coupling to the transport system. This chain is Phosphate import ATP-binding protein PstB, found in Pseudomonas putida (Arthrobacter siderocapsulatus).